We begin with the raw amino-acid sequence, 370 residues long: Probable neutral protease 2 homolog TRV_02539 (370 aa).

Residues 1–19 (MQLVAALAALGALVAPAVA) form the signal peptide. A propeptide spanning residues 20-188 (YPHAPMNETL…SIHSRALQKR (169 aa)) is cleaved from the precursor. Disulfide bonds link Cys-196/Cys-267 and Cys-274/Cys-292. Residue His-316 participates in Zn(2+) binding. The active site involves Glu-317. Zn(2+) contacts are provided by His-320 and Asp-331.

This sequence belongs to the peptidase M35 family. Requires Zn(2+) as cofactor.

It is found in the secreted. It catalyses the reaction Preferential cleavage of bonds with hydrophobic residues in P1'. Also 3-Asn-|-Gln-4 and 8-Gly-|-Ser-9 bonds in insulin B chain.. Its function is as follows. Probable secreted metalloprotease that shows high activities on basic nuclear substrates such as histone and protamine. May be involved in virulence. This chain is Probable neutral protease 2 homolog TRV_02539, found in Trichophyton verrucosum (strain HKI 0517).